The primary structure comprises 467 residues: Cysteine--tRNA ligase (467 aa).

A Zn(2+)-binding site is contributed by Cys28. The 'HIGH' region motif lies at 30–40; it reads MTVYDHCHLGH. Zn(2+) contacts are provided by Cys209, His234, and Glu238. Positions 266 to 270 match the 'KMSKS' region motif; the sequence is KMSKS. Lys269 lines the ATP pocket.

Belongs to the class-I aminoacyl-tRNA synthetase family. Monomer. Zn(2+) is required as a cofactor.

The protein resides in the cytoplasm. It catalyses the reaction tRNA(Cys) + L-cysteine + ATP = L-cysteinyl-tRNA(Cys) + AMP + diphosphate. This chain is Cysteine--tRNA ligase, found in Nitrosomonas eutropha (strain DSM 101675 / C91 / Nm57).